We begin with the raw amino-acid sequence, 226 residues long: Large ribosomal subunit protein uL4 (226 aa).

Residues 47–74 (GTAKAKTRSEVSGGGRKPWPQKHTGRAR) form a disordered region.

It belongs to the universal ribosomal protein uL4 family. In terms of assembly, part of the 50S ribosomal subunit.

Functionally, one of the primary rRNA binding proteins, this protein initially binds near the 5'-end of the 23S rRNA. It is important during the early stages of 50S assembly. It makes multiple contacts with different domains of the 23S rRNA in the assembled 50S subunit and ribosome. Forms part of the polypeptide exit tunnel. The polypeptide is Large ribosomal subunit protein uL4 (Kosmotoga olearia (strain ATCC BAA-1733 / DSM 21960 / TBF 19.5.1)).